A 134-amino-acid chain; its full sequence is Small ribosomal subunit protein uS11 (134 aa).

The protein belongs to the universal ribosomal protein uS11 family. Part of the 30S ribosomal subunit. Interacts with proteins S7 and S18. Binds to IF-3.

Its function is as follows. Located on the platform of the 30S subunit, it bridges several disparate RNA helices of the 16S rRNA. Forms part of the Shine-Dalgarno cleft in the 70S ribosome. The polypeptide is Small ribosomal subunit protein uS11 (Albidiferax ferrireducens (strain ATCC BAA-621 / DSM 15236 / T118) (Rhodoferax ferrireducens)).